The following is a 201-amino-acid chain: FMN reductase (NADH) RutF 1 (201 aa).

Low complexity predominate over residues 167–195 (PRAPRSGSAPAEPARAARAVGARPAEGPA). Residues 167–201 (PRAPRSGSAPAEPARAARAVGARPAEGPALALRSA) are disordered.

This sequence belongs to the non-flavoprotein flavin reductase family. RutF subfamily.

It catalyses the reaction FMNH2 + NAD(+) = FMN + NADH + 2 H(+). Its function is as follows. Catalyzes the reduction of FMN to FMNH2 which is used to reduce pyrimidine by RutA via the Rut pathway. The polypeptide is FMN reductase (NADH) RutF 1 (Methylorubrum extorquens (strain CM4 / NCIMB 13688) (Methylobacterium extorquens)).